We begin with the raw amino-acid sequence, 89 residues long: Small ribosomal subunit protein uS15 (89 aa).

A compositionally biased stretch (basic and acidic residues) spans 1–11 (MSIAAERKAEV). The interval 1–24 (MSIAAERKAEVIKTNATKAGDTGS) is disordered.

The protein belongs to the universal ribosomal protein uS15 family. In terms of assembly, part of the 30S ribosomal subunit. Forms a bridge to the 50S subunit in the 70S ribosome, contacting the 23S rRNA.

One of the primary rRNA binding proteins, it binds directly to 16S rRNA where it helps nucleate assembly of the platform of the 30S subunit by binding and bridging several RNA helices of the 16S rRNA. In terms of biological role, forms an intersubunit bridge (bridge B4) with the 23S rRNA of the 50S subunit in the ribosome. This Bradyrhizobium diazoefficiens (strain JCM 10833 / BCRC 13528 / IAM 13628 / NBRC 14792 / USDA 110) protein is Small ribosomal subunit protein uS15.